A 209-amino-acid chain; its full sequence is Na(+)-translocating NADH-quinone reductase subunit D (209 aa).

5 helical membrane passes run 42–62, 66–86, 103–123, 131–151, and 178–198; these read LVMT…ISLI, IPNS…VIVV, VFVG…AYAM, FMDG…VGFV, and NGLF…IWGL.

The protein belongs to the NqrDE/RnfAE family. In terms of assembly, composed of six subunits; NqrA, NqrB, NqrC, NqrD, NqrE and NqrF.

It localises to the cell inner membrane. The enzyme catalyses a ubiquinone + n Na(+)(in) + NADH + H(+) = a ubiquinol + n Na(+)(out) + NAD(+). Functionally, NQR complex catalyzes the reduction of ubiquinone-1 to ubiquinol by two successive reactions, coupled with the transport of Na(+) ions from the cytoplasm to the periplasm. NqrA to NqrE are probably involved in the second step, the conversion of ubisemiquinone to ubiquinol. This chain is Na(+)-translocating NADH-quinone reductase subunit D, found in Yersinia pseudotuberculosis serotype O:1b (strain IP 31758).